The chain runs to 32 residues: Acyclotide phyb-M (32 aa).

A Pyrrolidone carboxylic acid modification is found at Q1. 3 disulfides stabilise this stretch: C5–C21, C9–C23, and C14–C28.

Contains 3 disulfide bonds. In terms of tissue distribution, expressed in midvein, lamina and periphery of leaves (at protein level).

Functionally, probably participates in a plant defense mechanism. The chain is Acyclotide phyb-M from Petunia hybrida (Petunia).